Reading from the N-terminus, the 273-residue chain is 2,3,4,5-tetrahydropyridine-2,6-dicarboxylate N-succinyltransferase (273 aa).

Substrate contacts are provided by R104 and D141.

Belongs to the transferase hexapeptide repeat family. In terms of assembly, homotrimer.

It localises to the cytoplasm. It catalyses the reaction (S)-2,3,4,5-tetrahydrodipicolinate + succinyl-CoA + H2O = (S)-2-succinylamino-6-oxoheptanedioate + CoA. Its pathway is amino-acid biosynthesis; L-lysine biosynthesis via DAP pathway; LL-2,6-diaminopimelate from (S)-tetrahydrodipicolinate (succinylase route): step 1/3. This is 2,3,4,5-tetrahydropyridine-2,6-dicarboxylate N-succinyltransferase from Neisseria gonorrhoeae (strain ATCC 700825 / FA 1090).